A 243-amino-acid chain; its full sequence is 1-(5-phosphoribosyl)-5-[(5-phosphoribosylamino)methylideneamino] imidazole-4-carboxamide isomerase (243 aa).

Catalysis depends on aspartate 8, which acts as the Proton acceptor. The active-site Proton donor is aspartate 130.

This sequence belongs to the HisA/HisF family.

The protein localises to the cytoplasm. It catalyses the reaction 1-(5-phospho-beta-D-ribosyl)-5-[(5-phospho-beta-D-ribosylamino)methylideneamino]imidazole-4-carboxamide = 5-[(5-phospho-1-deoxy-D-ribulos-1-ylimino)methylamino]-1-(5-phospho-beta-D-ribosyl)imidazole-4-carboxamide. It participates in amino-acid biosynthesis; L-histidine biosynthesis; L-histidine from 5-phospho-alpha-D-ribose 1-diphosphate: step 4/9. This is 1-(5-phosphoribosyl)-5-[(5-phosphoribosylamino)methylideneamino] imidazole-4-carboxamide isomerase from Methylococcus capsulatus (strain ATCC 33009 / NCIMB 11132 / Bath).